The following is a 486-amino-acid chain: Cysteine--tRNA ligase (486 aa).

Residue cysteine 30 participates in Zn(2+) binding. The 'HIGH' region signature appears at proline 32–asparagine 42. The Zn(2+) site is built by cysteine 221, histidine 246, and glutamate 250. The short motif at lysine 279–serine 283 is the 'KMSKS' region element. Lysine 282 provides a ligand contact to ATP.

This sequence belongs to the class-I aminoacyl-tRNA synthetase family. As to quaternary structure, monomer. The cofactor is Zn(2+).

It localises to the cytoplasm. It catalyses the reaction tRNA(Cys) + L-cysteine + ATP = L-cysteinyl-tRNA(Cys) + AMP + diphosphate. This is Cysteine--tRNA ligase from Cereibacter sphaeroides (strain ATCC 17025 / ATH 2.4.3) (Rhodobacter sphaeroides).